Here is a 197-residue protein sequence, read N- to C-terminus: Wadjet protein JetB (197 aa).

Its function is as follows. Component of antiplasmid transformation system Wadjet type I, composed of JetA, JetB, JetC and JetD. Expression of Wadjet type I in B.subtilis (strain BEST7003) reduces the transformation efficiency of plasmid pHCMC05. This Bacillus cereus (strain Q1) protein is Wadjet protein JetB.